The sequence spans 347 residues: Inosamine-phosphate amidinotransferase 1 (347 aa).

Residues Asp-179 and His-227 contribute to the active site. Cys-332 (amidino-cysteine intermediate) is an active-site residue.

This sequence belongs to the amidinotransferase family. In terms of assembly, homodimer.

It carries out the reaction 1-amino-1-deoxy-scyllo-inositol 4-phosphate + L-arginine = 1-guanidino-1-deoxy-scyllo-inositol 4-phosphate + L-ornithine. It functions in the pathway antibiotic biosynthesis; streptomycin biosynthesis. Catalyzes two non-consecutive transamidination reactions. It converts scyllo-inosamine 4-phosphate into N-amidino-scyllo-inosamine 4-phosphate and N1-amidinostreptamine 6-phosphate into streptidine 6-phosphate. This Streptomyces griseus protein is Inosamine-phosphate amidinotransferase 1 (strB1).